A 513-amino-acid chain; its full sequence is Lysine--tRNA ligase (513 aa).

Residues glutamate 423 and glutamate 430 each contribute to the Mg(2+) site.

Belongs to the class-II aminoacyl-tRNA synthetase family. Homodimer. It depends on Mg(2+) as a cofactor.

It localises to the cytoplasm. It catalyses the reaction tRNA(Lys) + L-lysine + ATP = L-lysyl-tRNA(Lys) + AMP + diphosphate. This Anaeromyxobacter dehalogenans (strain 2CP-1 / ATCC BAA-258) protein is Lysine--tRNA ligase.